The following is a 91-amino-acid chain: Large ribosomal subunit protein uL23c (91 aa).

This sequence belongs to the universal ribosomal protein uL23 family. Part of the 50S ribosomal subunit.

It is found in the plastid. The protein localises to the chloroplast. Functionally, binds to 23S rRNA. The chain is Large ribosomal subunit protein uL23c (rpl23) from Marchantia polymorpha (Common liverwort).